The chain runs to 568 residues: 4-hydroxy-7-methoxy-3-oxo-3,4-dihydro-2H-1,4-benzoxazin-2-yl glucoside beta-D-glucosidase, chloroplastic (568 aa).

A chloroplast-targeting transit peptide spans 1 to 50; sequence MALLVGGTLNPTTHLSLRSRAGRNSENVWLRSAASSQTSKGRFCNLTVRA. A beta-D-glucoside-binding positions include Gln-92, His-194, and 239 to 240; that span reads NE. The active-site Proton donor is Glu-240. Cysteines 259 and 265 form a disulfide. A beta-D-glucoside contacts are provided by residues Tyr-383, Glu-456, Trp-504, 511 to 512, and Phe-520; that span reads EW. The active-site Nucleophile is Glu-456.

The protein belongs to the glycosyl hydrolase 1 family. As to quaternary structure, homohexamer. Expressed in seedlings, mesocotyl, coleoptile, leaf sheath, and roots.

Its subcellular location is the plastid. It is found in the chloroplast. It carries out the reaction DIMBOA beta-D-glucoside + H2O = DIMBOA + D-glucose. The catalysed reaction is DIBOA beta-D-glucoside + H2O = DIBOA + D-glucose. The enzyme catalyses Hydrolysis of terminal, non-reducing beta-D-glucosyl residues with release of beta-D-glucose.. Inhibited by castanospermine, Ag(+) and Cu(2+). 34% inhibition by Zn(2+) and not affected by EDTA. Its function is as follows. Involved in defense of young plant parts against pests via the production of benzoxazolinones (hydroxamic acids) from hydroxamic acid glucosides. The preferred substrate is DIBOA-beta-D-glucoside. Can also use esculin and genistein glucoside as substrates, but no activity with salicin, p-nitrophenyl-alpha-glucoside or substrates related to cell wall components. This chain is 4-hydroxy-7-methoxy-3-oxo-3,4-dihydro-2H-1,4-benzoxazin-2-yl glucoside beta-D-glucosidase, chloroplastic, found in Secale cereale (Rye).